We begin with the raw amino-acid sequence, 267 residues long: Putative N-acetylmuramoyl-L-alanine amidase RC0497 (267 aa).

A disordered region spans residues 1–25 (MSKSKAIENNGISNTNSPNGKYMAP). Residues 10-19 (NGISNTNSPN) show a composition bias toward polar residues. One can recognise an N-acetylmuramoyl-L-alanine amidase domain in the interval 33 to 141 (TCVVITYSVS…NLDLKHDLVG (109 aa)).

This sequence belongs to the N-acetylmuramoyl-L-alanine amidase 2 family.

It localises to the secreted. It catalyses the reaction Hydrolyzes the link between N-acetylmuramoyl residues and L-amino acid residues in certain cell-wall glycopeptides.. This Rickettsia conorii (strain ATCC VR-613 / Malish 7) protein is Putative N-acetylmuramoyl-L-alanine amidase RC0497.